The primary structure comprises 427 residues: 3-phosphoshikimate 1-carboxyvinyltransferase (427 aa).

The 3-phosphoshikimate site is built by lysine 20, serine 21, and arginine 25. Residue lysine 20 coordinates phosphoenolpyruvate. 2 residues coordinate phosphoenolpyruvate: glycine 92 and arginine 120. Residues serine 165, glutamine 167, aspartate 313, and lysine 340 each contribute to the 3-phosphoshikimate site. Glutamine 167 serves as a coordination point for phosphoenolpyruvate. The Proton acceptor role is filled by aspartate 313. Phosphoenolpyruvate-binding residues include arginine 344 and arginine 388.

It belongs to the EPSP synthase family. In terms of assembly, monomer.

It is found in the cytoplasm. The enzyme catalyses 3-phosphoshikimate + phosphoenolpyruvate = 5-O-(1-carboxyvinyl)-3-phosphoshikimate + phosphate. Its pathway is metabolic intermediate biosynthesis; chorismate biosynthesis; chorismate from D-erythrose 4-phosphate and phosphoenolpyruvate: step 6/7. In terms of biological role, catalyzes the transfer of the enolpyruvyl moiety of phosphoenolpyruvate (PEP) to the 5-hydroxyl of shikimate-3-phosphate (S3P) to produce enolpyruvyl shikimate-3-phosphate and inorganic phosphate. This chain is 3-phosphoshikimate 1-carboxyvinyltransferase, found in Geobacillus kaustophilus (strain HTA426).